Consider the following 601-residue polypeptide: uncharacterized protein (601 aa).

Belongs to the chlamydial CPn_1016/CT_858/TC_0248 family.

This is an uncharacterized protein from Chlamydia muridarum (strain MoPn / Nigg).